The primary structure comprises 152 residues: FAD synthase (152 aa).

Residues Thr-16 to Phe-17, His-21 to His-24, Asp-101, and Tyr-129 contribute to the ATP site.

This sequence belongs to the archaeal FAD synthase family. As to quaternary structure, homodimer. It depends on a divalent metal cation as a cofactor.

It catalyses the reaction FMN + ATP + H(+) = FAD + diphosphate. It functions in the pathway cofactor biosynthesis; FAD biosynthesis; FAD from FMN: step 1/1. Catalyzes the transfer of the AMP portion of ATP to flavin mononucleotide (FMN) to produce flavin adenine dinucleotide (FAD) coenzyme. This Methanocaldococcus vulcanius (strain ATCC 700851 / DSM 12094 / M7) (Methanococcus vulcanius) protein is FAD synthase.